The primary structure comprises 288 residues: uncharacterized protein (288 aa).

The chain crosses the membrane as a helical span at residues 92–112 (LPTILVILGVIVVIAIVYAII). Residues 121–183 (DDHNAASEKA…NDSEKLEIKA (63 aa)) are disordered. 2 stretches are compositionally biased toward basic and acidic residues: residues 136-146 (SKYEIPKDSTL) and 154-181 (SEKETDTKKETKENEDKKKENDSEKLEI). The stretch at 147–185 (KENQNNSSEKETDTKKETKENEDKKKENDSEKLEIKAAG) forms a coiled coil.

The protein resides in the cell membrane. This is an uncharacterized protein from Bacillus subtilis (strain 168).